The following is a 69-amino-acid chain: U2-agatoxin-Ao1i (69 aa).

The signal sequence occupies residues 1 to 20; it reads MKAIISLLLISAMVFSMIEA. The propeptide occupies 21 to 34; the sequence is VPVXXGLQLFESER. 3 cysteine pairs are disulfide-bonded: Cys-36–Cys-52, Cys-43–Cys-57, and Cys-51–Cys-67. Leu-68 carries the leucine amide modification.

Belongs to the neurotoxin 01 (U2-agtx) family. In terms of tissue distribution, expressed by the venom gland.

Its subcellular location is the secreted. In terms of biological role, insect active toxin causing rapid but reversible paralysis in crickets. No activity shown in mammals. Does not show effect on mammalian voltage-gated calcium channels. In Agelena orientalis (Funnel-web spider), this protein is U2-agatoxin-Ao1i.